The chain runs to 639 residues: Protein phosphatase 2C 35 (639 aa).

The PPM-type phosphatase domain occupies Gly-227 to Leu-630. 2 residues coordinate Mn(2+): Asp-262 and Gly-263. Residues Gln-295 to Arg-341 are disordered. Polar residues predominate over residues Ser-308–Gln-320. Basic residues predominate over residues Arg-323 to Pro-332. Mn(2+) is bound by residues Asp-558 and Asp-621.

The protein belongs to the PP2C family. In terms of assembly, interacts with XA21 (via juxtamembrane and kinase domains). Mg(2+) serves as cofactor. Mn(2+) is required as a cofactor.

It localises to the cell membrane. It catalyses the reaction O-phospho-L-seryl-[protein] + H2O = L-seryl-[protein] + phosphate. The catalysed reaction is O-phospho-L-threonyl-[protein] + H2O = L-threonyl-[protein] + phosphate. Functionally, protein phosphatase that acts on XA21 pathogen recognition receptor. Negatively regulates cell death and XA21-mediated innate immunity. This is Protein phosphatase 2C 35 (XB15) from Oryza sativa subsp. japonica (Rice).